The chain runs to 311 residues: Acetyl-coenzyme A carboxylase carboxyl transferase subunit beta (311 aa).

The 270-residue stretch at 27–296 (LWTKCGHCSA…AEAADAPEAG (270 aa)) folds into the CoA carboxyltransferase N-terminal domain. 4 residues coordinate Zn(2+): C31, C34, C50, and C53. The C4-type zinc-finger motif lies at 31-53 (CGHCSAVLYRPELERNQEVCPKC). Positions 286-299 (AAEAADAPEAGEQP) are enriched in low complexity. Residues 286-311 (AAEAADAPEAGEQPSEATDPVGEHWD) are disordered.

It belongs to the AccD/PCCB family. As to quaternary structure, acetyl-CoA carboxylase is a heterohexamer composed of biotin carboxyl carrier protein (AccB), biotin carboxylase (AccC) and two subunits each of ACCase subunit alpha (AccA) and ACCase subunit beta (AccD). Zn(2+) serves as cofactor.

It localises to the cytoplasm. It catalyses the reaction N(6)-carboxybiotinyl-L-lysyl-[protein] + acetyl-CoA = N(6)-biotinyl-L-lysyl-[protein] + malonyl-CoA. The protein operates within lipid metabolism; malonyl-CoA biosynthesis; malonyl-CoA from acetyl-CoA: step 1/1. Component of the acetyl coenzyme A carboxylase (ACC) complex. Biotin carboxylase (BC) catalyzes the carboxylation of biotin on its carrier protein (BCCP) and then the CO(2) group is transferred by the transcarboxylase to acetyl-CoA to form malonyl-CoA. This chain is Acetyl-coenzyme A carboxylase carboxyl transferase subunit beta, found in Alkalilimnicola ehrlichii (strain ATCC BAA-1101 / DSM 17681 / MLHE-1).